A 67-amino-acid chain; its full sequence is UPF0434 protein Lcho_2556 (67 aa).

It belongs to the UPF0434 family.

The sequence is that of UPF0434 protein Lcho_2556 from Leptothrix cholodnii (strain ATCC 51168 / LMG 8142 / SP-6) (Leptothrix discophora (strain SP-6)).